We begin with the raw amino-acid sequence, 953 residues long: 26S proteasome non-ATPase regulatory subunit 1 (953 aa).

At Met-1 the chain carries N-acetylmethionine. Phosphothreonine is present on Thr-273. The segment at 277–319 (SVPGSTNTGTVPGSEKDSDPMETEEKTASAVAGKTPDASPEPK) is disordered. Position 290 is a phosphoserine (Ser-290). Residues 290 to 303 (SEKDSDPMETEEKT) are compositionally biased toward basic and acidic residues. The residue at position 310 (Lys-310) is an N6-acetyllysine. Residue Thr-311 is modified to Phosphothreonine. A Phosphoserine modification is found at Ser-315. PC repeat units follow at residues 403-436 (TATA…PGSA), 441-474 (GGLY…DIVR), 476-510 (GGSL…VTGE), 511-545 (AAGL…EKIL), 547-580 (GLAV…ILRR), 581-616 (SGMY…DVRR), 617-649 (AAVE…PHVR), 651-685 (GAAM…YVRQ), 686-726 (GALI…DVMA), and 729-761 (GAIL…PSVV). At Lys-720 the chain carries N6-acetyllysine. Phosphothreonine is present on Thr-830. At Ser-834 the chain carries Phosphoserine. Disordered stretches follow at residues 839 to 881 (AKKK…LDNP) and 930 to 953 (AHGP…YIDD). Basic and acidic residues-rich tracts occupy residues 842–852 (KEKEKEKKEEE) and 859–872 (AEKK…KEPE). Acidic residues predominate over residues 936–953 (EEEEQEPEPPEPFEYIDD).

It belongs to the proteasome subunit S1 family. Component of the 19S proteasome regulatory particle complex. The 26S proteasome consists of a 20S core particle (CP) and two 19S regulatory subunits (RP). The regulatory particle is made of a lid composed of 9 subunits, a base containing 6 ATPases and few additional components including PSMD1. Interacts with ADRM1. Interacts with ZFAND1.

Component of the 26S proteasome, a multiprotein complex involved in the ATP-dependent degradation of ubiquitinated proteins. This complex plays a key role in the maintenance of protein homeostasis by removing misfolded or damaged proteins, which could impair cellular functions, and by removing proteins whose functions are no longer required. Therefore, the proteasome participates in numerous cellular processes, including cell cycle progression, apoptosis, or DNA damage repair. This is 26S proteasome non-ATPase regulatory subunit 1 (Psmd1) from Mus musculus (Mouse).